The following is a 165-amino-acid chain: uncharacterized protein (165 aa).

This sequence belongs to the SixA phosphatase family.

This is an uncharacterized protein from Picosynechococcus sp. (strain ATCC 27264 / PCC 7002 / PR-6) (Agmenellum quadruplicatum).